The chain runs to 338 residues: tRNA dimethylallyltransferase (338 aa).

13 to 20 serves as a coordination point for ATP; that stretch reads GPTASGKT. 15–20 is a binding site for substrate; it reads TASGKT. Interaction with substrate tRNA stretches follow at residues 38–41 and 162–166; these read DSTL and QRVSR.

The protein belongs to the IPP transferase family. Monomer. It depends on Mg(2+) as a cofactor.

The catalysed reaction is adenosine(37) in tRNA + dimethylallyl diphosphate = N(6)-dimethylallyladenosine(37) in tRNA + diphosphate. Functionally, catalyzes the transfer of a dimethylallyl group onto the adenine at position 37 in tRNAs that read codons beginning with uridine, leading to the formation of N6-(dimethylallyl)adenosine (i(6)A). The chain is tRNA dimethylallyltransferase from Cellvibrio japonicus (strain Ueda107) (Pseudomonas fluorescens subsp. cellulosa).